The following is a 487-amino-acid chain: Malonate-semialdehyde dehydrogenase (487 aa).

A150, F152, K176, E179, R180, S229, and T251 together coordinate NAD(+). C284 serves as the catalytic Nucleophile. NAD(+) is bound at residue E382.

The protein belongs to the aldehyde dehydrogenase family. IolA subfamily. In terms of assembly, homotetramer.

The catalysed reaction is 3-oxopropanoate + NAD(+) + CoA + H2O = hydrogencarbonate + acetyl-CoA + NADH + H(+). It carries out the reaction 2-methyl-3-oxopropanoate + NAD(+) + CoA + H2O = propanoyl-CoA + hydrogencarbonate + NADH + H(+). It functions in the pathway polyol metabolism; myo-inositol degradation into acetyl-CoA; acetyl-CoA from myo-inositol: step 7/7. Catalyzes the oxidation of malonate semialdehyde (MSA) and methylmalonate semialdehyde (MMSA) into acetyl-CoA and propanoyl-CoA, respectively. Is involved in a myo-inositol catabolic pathway. Bicarbonate, and not CO2, is the end-product of the enzymatic reaction. The polypeptide is Malonate-semialdehyde dehydrogenase (Bacillus velezensis (strain DSM 23117 / BGSC 10A6 / LMG 26770 / FZB42) (Bacillus amyloliquefaciens subsp. plantarum)).